Reading from the N-terminus, the 510-residue chain is NAD(P)H-quinone oxidoreductase subunit 2 B, chloroplastic (510 aa).

13 helical membrane passes run 24-44, 57-77, 99-119, 124-144, 149-169, 183-203, 227-247, 295-315, 323-343, 354-374, 395-415, 418-438, and 484-504; these read LLLF…GLIL, IPWL…ALLF, IFQF…VEYI, MAIT…MFLC, LITI…LSGY, YLLM…WLYG, PGIS…LSPA, WHLL…LIAI, MLAY…IVGD, YMLF…LFGL, ALSL…AGFF, LYLF…IGLL, and MIVC…IIAI.

Belongs to the complex I subunit 2 family. As to quaternary structure, NDH is composed of at least 16 different subunits, 5 of which are encoded in the nucleus.

It is found in the plastid. The protein localises to the chloroplast thylakoid membrane. It carries out the reaction a plastoquinone + NADH + (n+1) H(+)(in) = a plastoquinol + NAD(+) + n H(+)(out). It catalyses the reaction a plastoquinone + NADPH + (n+1) H(+)(in) = a plastoquinol + NADP(+) + n H(+)(out). NDH shuttles electrons from NAD(P)H:plastoquinone, via FMN and iron-sulfur (Fe-S) centers, to quinones in the photosynthetic chain and possibly in a chloroplast respiratory chain. The immediate electron acceptor for the enzyme in this species is believed to be plastoquinone. Couples the redox reaction to proton translocation, and thus conserves the redox energy in a proton gradient. The chain is NAD(P)H-quinone oxidoreductase subunit 2 B, chloroplastic from Helianthus annuus (Common sunflower).